Here is a 448-residue protein sequence, read N- to C-terminus: Exodeoxyribonuclease 7 large subunit (448 aa).

Belongs to the XseA family. In terms of assembly, heterooligomer composed of large and small subunits.

The protein localises to the cytoplasm. It catalyses the reaction Exonucleolytic cleavage in either 5'- to 3'- or 3'- to 5'-direction to yield nucleoside 5'-phosphates.. Its function is as follows. Bidirectionally degrades single-stranded DNA into large acid-insoluble oligonucleotides, which are then degraded further into small acid-soluble oligonucleotides. In Alcanivorax borkumensis (strain ATCC 700651 / DSM 11573 / NCIMB 13689 / SK2), this protein is Exodeoxyribonuclease 7 large subunit.